The sequence spans 213 residues: Uridine kinase (213 aa).

Position 15-22 (15-22 (GASASGKS)) interacts with ATP.

It belongs to the uridine kinase family.

The protein resides in the cytoplasm. The catalysed reaction is uridine + ATP = UMP + ADP + H(+). It carries out the reaction cytidine + ATP = CMP + ADP + H(+). It participates in pyrimidine metabolism; CTP biosynthesis via salvage pathway; CTP from cytidine: step 1/3. Its pathway is pyrimidine metabolism; UMP biosynthesis via salvage pathway; UMP from uridine: step 1/1. The chain is Uridine kinase from Salmonella paratyphi A (strain ATCC 9150 / SARB42).